We begin with the raw amino-acid sequence, 194 residues long: Probable GTP-binding protein EngB (194 aa).

An EngB-type G domain is found at 22 to 194 (DLPEFALAGR…KFWDWIEDKM (173 aa)). Residues 30–37 (GRSNVGKS), 57–61 (GKTQT), 75–78 (DVPG), 142–145 (TKMD), and 175–177 (FSS) each bind GTP. 2 residues coordinate Mg(2+): S37 and T59.

Belongs to the TRAFAC class TrmE-Era-EngA-EngB-Septin-like GTPase superfamily. EngB GTPase family. The cofactor is Mg(2+).

Its function is as follows. Necessary for normal cell division and for the maintenance of normal septation. This chain is Probable GTP-binding protein EngB, found in Lactobacillus gasseri (strain ATCC 33323 / DSM 20243 / BCRC 14619 / CIP 102991 / JCM 1131 / KCTC 3163 / NCIMB 11718 / NCTC 13722 / AM63).